The primary structure comprises 710 residues: Dendrin (710 aa).

Disordered regions lie at residues 1 to 22 (MLDGPLFSEGPDSPRELQDEES), 62 to 195 (WARG…PWGG), 213 to 274 (AGTA…KRLD), and 324 to 375 (GLNS…GKEG). The stretch at 103 to 134 (AEVRAREQEKRKAASQEREAKETERKRRKAGG) forms a coiled coil. Residues 105 to 127 (VRAREQEKRKAASQEREAKETER) are compositionally biased toward basic and acidic residues. Positions 113 to 131 (RKAASQEREAKETERKRRK) are nuclear localization. The interval 186–236 (GVAWAGPWGGRRPGPPSYEAHLLLRGSAGTAPRRRWDRPPPYVAPPSYEGP) is interaction with MAGI2. The segment covering 265–274 (EGGRTKKRLD) has biased composition (basic and acidic residues). The segment at 341 to 435 (PGTDAALSRS…LEVWKVTRRA (95 aa)) is interaction with ACTN1. Residues 360–370 (PRSRQHLRGSR) show a composition bias toward basic residues. Ser388 bears the Phosphoserine mark. 3 disordered regions span residues 390-422 (KKPPVRHSQTLPRPWAPGGTGWKESLGQREGAE), 469-508 (PRTQQGQLVPSGESCSVSDSLSQPKPCHEEEGEGAAANPS), and 521-710 (NQPS…RERE). The tract at residues 407-708 (GGTGWKESLG…TRKTPQGNRE (302 aa)) is interaction with CD2AP and NPHS1. Positions 469-491 (PRTQQGQLVPSGESCSVSDSLSQ) are enriched in polar residues. Basic and acidic residues predominate over residues 693-710 (GFIREDTRKTPQGNRERE).

Forms a ternary complex with MAGI2 and SH3KBP1; recruits DDN to the cytoplasm. Interacts with MAGI1. Interacts with ACTN1 and may interact with WWC1. Interacts with the podocyte slit diaphragm proteins CD2AP, NPHS1 and NPHS2; the interaction with CD2AP and NPHS1 is direct. Two forms of 81 kDa and 89 kDa are expressed in brain. The 81 kDa form is the only one found in kidney podocytes.

It is found in the cell projection. Its subcellular location is the dendritic spine membrane. The protein resides in the cytoplasm. It localises to the endoplasmic reticulum membrane. The protein localises to the perikaryon. It is found in the nucleus. Functionally, promotes apoptosis of kidney glomerular podocytes. Podocytes are highly specialized cells essential to the ultrafiltration of blood, resulting in the extraction of urine and the retention of protein. The polypeptide is Dendrin (Ddn) (Mus musculus (Mouse)).